We begin with the raw amino-acid sequence, 356 residues long: Phenylalanine--tRNA ligase alpha subunit (356 aa).

A Mg(2+)-binding site is contributed by E260.

This sequence belongs to the class-II aminoacyl-tRNA synthetase family. Phe-tRNA synthetase alpha subunit type 1 subfamily. In terms of assembly, tetramer of two alpha and two beta subunits. Mg(2+) is required as a cofactor.

Its subcellular location is the cytoplasm. The enzyme catalyses tRNA(Phe) + L-phenylalanine + ATP = L-phenylalanyl-tRNA(Phe) + AMP + diphosphate + H(+). In Gluconobacter oxydans (strain 621H) (Gluconobacter suboxydans), this protein is Phenylalanine--tRNA ligase alpha subunit.